The sequence spans 485 residues: MIRNDTMLKGQFVLKKTQIALSAALMGSVLLTGCVTQKSNTESNGPKDTQVSYVEYFADNAVGNPLAIVQHPAAIHKNGITYVSYQGPKEDPFVATYNHSTKEWSGPFKAGTSELGRRDGGKKFDNHGKPTMLIDDEGYVHIFYGGHGGHSSNGKNPLGNTHFGANKHAVSKKPYDITQWEDLDNITPFGTYNQVVKMDNGDIYLFFRHGAHRSDWVYQKSVDNGRTFSSPVSFLKHKRRTDIEAVDSWYAWVGKGEGDNLIVSYDYHVCWDGGAGINGRGHTTERHDVYFMNFNTKTNQWSNVEGESLALPVTKEVADDKTLAMKTGALWTFNGTSHLDNEGHPHIAINAGVDRGAKTGGPKQTRHVWWDGKKWLGGNNIIEGYQGVSRGDFRVTDPSDIRYLVTYEKEGDAVLSWWDSDEDGNAFSEGSTVLRKNNATFAISALIENAHPEAQMLVAEKESDENIKIYLVGEDGPVPRALSNL.

The N-terminal stretch at 1 to 33 (MIRNDTMLKGQFVLKKTQIALSAALMGSVLLTG) is a signal peptide. C34 carries the N-palmitoyl cysteine lipid modification. A lipid anchor (S-diacylglycerol cysteine) is attached at C34. Residues N64 and N126 each coordinate substrate. A disordered region spans residues 108–128 (FKAGTSELGRRDGGKKFDNHG). Residues 115–128 (LGRRDGGKKFDNHG) are compositionally biased toward basic and acidic residues. H127 functions as the Proton donor in the catalytic mechanism. Substrate contacts are provided by K129 and H147. Catalysis depends on Y192, which acts as the Proton acceptor. 3 residues coordinate substrate: R208, H212, and Y250. H212 is a Zn(2+) binding site. Residues H268, C270, and H282 each coordinate Zn(2+). Residue H282 participates in substrate binding.

Belongs to the polysaccharide lyase 25 family.

The protein localises to the cell membrane. Its function is as follows. Ulvan lyase involved in ulvan degradation. Ulvan is the main polysaccharide component of the Ulvales (green seaweed) cell wall. It is composed of disaccharide building blocks comprising 3-sulfated rhamnose (Rha3S) linked to D-glucuronic acid (GlcA), L-iduronic acid (IduA), or D-xylose (Xyl). Ulvan lyase catalyzes the endolytic cleavage of the glycosidic bond between Rha3S and the uronic acids GlcA or IduA, producing oligosaccharides that have unsaturated 4-deoxy-L-threo-hex-4-enopyranosiduronic acid (deltaUA) at the non-reducing end. This results eventually in the degradation of the ulvan polysaccharide into deltaUA-Rha3S disaccharides and deltaUA-Rha3S-Xyl-Rha3S tetrasaccharides. The protein is Ulvan lyase of Alteromonas sp. (strain LOR).